Consider the following 360-residue polypeptide: DNA replication and repair protein RecF (360 aa).

30-37 serves as a coordination point for ATP; it reads GQNGSGKT.

Belongs to the RecF family.

It localises to the cytoplasm. Functionally, the RecF protein is involved in DNA metabolism; it is required for DNA replication and normal SOS inducibility. RecF binds preferentially to single-stranded, linear DNA. It also seems to bind ATP. The polypeptide is DNA replication and repair protein RecF (Shewanella piezotolerans (strain WP3 / JCM 13877)).